A 193-amino-acid polypeptide reads, in one-letter code: Putative RING finger protein ORF38 (193 aa).

The RING-type zinc-finger motif lies at 12–50 (CCICLDDEDVDRDNTIPCRHTVCRTCYVKPMLDQCPVCR).

The protein is Putative RING finger protein ORF38 of Magallana gigas (Pacific oyster).